Reading from the N-terminus, the 249-residue chain is 5'-nucleotidase SurE (249 aa).

Residues Asp-8, Asp-9, Ser-39, and Asn-91 each contribute to the a divalent metal cation site.

Belongs to the SurE nucleotidase family. The cofactor is a divalent metal cation.

It localises to the cytoplasm. The enzyme catalyses a ribonucleoside 5'-phosphate + H2O = a ribonucleoside + phosphate. Nucleotidase that shows phosphatase activity on nucleoside 5'-monophosphates. This chain is 5'-nucleotidase SurE, found in Pseudomonas savastanoi pv. phaseolicola (strain 1448A / Race 6) (Pseudomonas syringae pv. phaseolicola (strain 1448A / Race 6)).